The primary structure comprises 390 residues: uncharacterized protein (390 aa).

11 consecutive transmembrane segments (helical) span residues 10–30, 43–63, 81–101, 134–154, 162–182, 213–233, 246–266, 272–292, 298–318, 341–361, and 363–383; these read LSFCVIFLLRMLGMFMILPIL, FLIGLSMGIYGISQVIFQIPF, FMFFIGNIISASIHSIWGLII, AIGVSFAISFLIAVVSGPIIV, IFWISAFLSIVCMIIVCFFVP, FYLGVFFLHFLLMIKFTMIPN, WKVYLGTILISFFVLFLFIFY, ILENIIEICILFILFSEIIFL, LLFLIISLQIFFISFNFLEVF, TSQFLGIFFGGVFSGWLYSFL, and FSQIFYFELFIILLWLIFSFF.

Belongs to the major facilitator superfamily.

Its subcellular location is the cell membrane. This is an uncharacterized protein from Buchnera aphidicola subsp. Acyrthosiphon pisum (strain APS) (Acyrthosiphon pisum symbiotic bacterium).